The chain runs to 116 residues: Putative anti-sigma factor antagonist BtrV (116 aa).

Residues M1–F110 form the STAS domain. S55 bears the Phosphoserine; by BtrW mark.

The protein belongs to the anti-sigma-factor antagonist family. In terms of assembly, interacts with BtrW. Post-translationally, phosphorylated by BtrW. Dephosphorylated by BtrU.

Functionally, possible positive regulator of sigma-B activity. Non-phosphorylated BtrV binds to BtrW, preventing its association with an unknown partner(s) that might be sigma-B. When phosphorylated, releases BtrW, which is then free to complex with and inactivate its partner. Involved in type III secretion system (T3SS). This is Putative anti-sigma factor antagonist BtrV (btrV) from Bordetella bronchiseptica (strain ATCC BAA-588 / NCTC 13252 / RB50) (Alcaligenes bronchisepticus).